The primary structure comprises 3507 residues: Dynein axonemal heavy chain 14 (3507 aa).

Residues 91-126 form a disordered region; it reads PHLPGTQDPLRRVRDPTPIVASSPGRRRGSWSGGYG. The stretch at 354–381 forms a coiled coil; it reads DEFCEEQLQQATQALKQLEDIRNKAISE. A GPAGTGKT motif motif is present at residues 1164 to 1171; sequence GPAGTGKT. ATP-binding positions include 1164 to 1171 and 1427 to 1434; these read GPAGTGKT and GPTGGGKT. N-linked (GlcNAc...) asparagine glycosylation occurs at Asn1818.

The protein belongs to the dynein heavy chain family. Consists of at least two heavy chains and a number of intermediate and light chains.

It localises to the cytoplasm. The protein resides in the cytoskeleton. The protein localises to the cilium axoneme. Force generating protein of respiratory cilia. Produces force towards the minus ends of microtubules. Dynein has ATPase activity; the force-producing power stroke is thought to occur on release of ADP. Involved in sperm motility; implicated in sperm flagellar assembly. The polypeptide is Dynein axonemal heavy chain 14 (DNAH14) (Homo sapiens (Human)).